A 347-amino-acid chain; its full sequence is GMP reductase (347 aa).

Ala108–Ala131 serves as a coordination point for NADP(+). K(+) is bound by residues Gly181 and Gly183. Residue Cys186 is the Thioimidate intermediate of the active site. Position 216 to 239 (Ile216 to Val239) interacts with NADP(+).

This sequence belongs to the IMPDH/GMPR family. GuaC type 1 subfamily. Homotetramer.

It catalyses the reaction IMP + NH4(+) + NADP(+) = GMP + NADPH + 2 H(+). In terms of biological role, catalyzes the irreversible NADPH-dependent deamination of GMP to IMP. It functions in the conversion of nucleobase, nucleoside and nucleotide derivatives of G to A nucleotides, and in maintaining the intracellular balance of A and G nucleotides. This is GMP reductase from Salmonella arizonae (strain ATCC BAA-731 / CDC346-86 / RSK2980).